The sequence spans 463 residues: tRNA-2-methylthio-N(6)-dimethylallyladenosine synthase (463 aa).

In terms of domain architecture, MTTase N-terminal spans 19–135; it reads RSYWITTFGC…LENLLGKVDL (117 aa). Residues C28, C64, C98, C170, C174, and C177 each coordinate [4Fe-4S] cluster. The Radical SAM core domain occupies 156–393; sequence RESSICGWVN…NALVEKTARN (238 aa). The region spanning 396–463 is the TRAM domain; that stretch reads QRYINNIESV…RPFSLTGELC (68 aa).

Belongs to the methylthiotransferase family. MiaB subfamily. Monomer. Requires [4Fe-4S] cluster as cofactor.

Its subcellular location is the cytoplasm. It catalyses the reaction N(6)-dimethylallyladenosine(37) in tRNA + (sulfur carrier)-SH + AH2 + 2 S-adenosyl-L-methionine = 2-methylsulfanyl-N(6)-dimethylallyladenosine(37) in tRNA + (sulfur carrier)-H + 5'-deoxyadenosine + L-methionine + A + S-adenosyl-L-homocysteine + 2 H(+). Catalyzes the methylthiolation of N6-(dimethylallyl)adenosine (i(6)A), leading to the formation of 2-methylthio-N6-(dimethylallyl)adenosine (ms(2)i(6)A) at position 37 in tRNAs that read codons beginning with uridine. This Prochlorococcus marinus (strain MIT 9312) protein is tRNA-2-methylthio-N(6)-dimethylallyladenosine synthase.